We begin with the raw amino-acid sequence, 172 residues long: Cytochrome b6-f complex iron-sulfur subunit (172 aa).

Residues 19-39 (LNALLSGSVGVVVVGALYPVV) form a helical membrane-spanning segment. In terms of domain architecture, Rieske spans 61–161 (GKPISVSELL…ATVDGDNVRF (101 aa)). Residues cysteine 107, histidine 109, cysteine 125, and histidine 128 each contribute to the [2Fe-2S] cluster site. Cysteine 112 and cysteine 127 are disulfide-bonded.

The protein belongs to the Rieske iron-sulfur protein family. The 4 large subunits of the cytochrome b6-f complex are cytochrome b6, subunit IV (17 kDa polypeptide, PetD), cytochrome f and the Rieske protein, while the 4 small subunits are PetG, PetL, PetM and PetN. The complex functions as a dimer. [2Fe-2S] cluster serves as cofactor.

The protein resides in the cellular thylakoid membrane. It carries out the reaction 2 oxidized [plastocyanin] + a plastoquinol + 2 H(+)(in) = 2 reduced [plastocyanin] + a plastoquinone + 4 H(+)(out). In terms of biological role, component of the cytochrome b6-f complex, which mediates electron transfer between photosystem II (PSII) and photosystem I (PSI), cyclic electron flow around PSI, and state transitions. This chain is Cytochrome b6-f complex iron-sulfur subunit, found in Synechococcus sp. (strain JA-2-3B'a(2-13)) (Cyanobacteria bacterium Yellowstone B-Prime).